The sequence spans 502 residues: Beta-glucosidase 7 (502 aa).

A signal peptide spans 1–22 (MKPFSQFFVFVVTVSATSYIDA). Residues glutamine 42, histidine 140, and 185 to 186 (NE) contribute to the a beta-D-glucoside site. Residue glutamate 186 is the Proton donor of the active site. Residue asparagine 208 is glycosylated (N-linked (GlcNAc...) asparagine). An a beta-D-glucoside-binding site is contributed by tyrosine 325. Residue asparagine 359 is glycosylated (N-linked (GlcNAc...) asparagine). Glutamate 392 serves as a coordination point for a beta-D-glucoside. Glutamate 392 acts as the Nucleophile in catalysis. A glycan (N-linked (GlcNAc...) asparagine) is linked at asparagine 425. A beta-D-glucoside is bound by residues tryptophan 435 and tyrosine 451. Residues asparagine 457 and asparagine 479 are each glycosylated (N-linked (GlcNAc...) asparagine).

It belongs to the glycosyl hydrolase 1 family.

The catalysed reaction is Hydrolysis of terminal, non-reducing beta-D-glucosyl residues with release of beta-D-glucose.. The polypeptide is Beta-glucosidase 7 (Arabidopsis thaliana (Mouse-ear cress)).